Reading from the N-terminus, the 284-residue chain is Aldo-keto reductase MAV_3816 (284 aa).

The active-site Proton donor is the Y59. NADPH is bound by residues L199, I237, R239, S240, A241, S248, and R275.

This sequence belongs to the aldo/keto reductase family.

In Mycobacterium avium (strain 104), this protein is Aldo-keto reductase MAV_3816.